The chain runs to 240 residues: MGRAFEYRRAAKEKRWDKMSKVFPKLAKAITLAAKDGGSEPDTNAKLRTAILNAKAQNMPKDNIDAAIKRASSKEGNLSEITYEGKANFGVLIIMECMTDNPTRTIANLKSYFNKTQGASIVPNGSLEFMFNRKSVFECLKNEVENLKLSLEDLEFALIDYGLEELEEVEDKIIIRGDYNSFKLLNEGFESLKLPILKASLQRIATTPIELNDEQMELTEKLLDRIEDDDDVVALYTNIE.

Belongs to the TACO1 family.

The protein localises to the cytoplasm. The protein is Probable transcriptional regulatory protein HP_0162 of Helicobacter pylori (strain ATCC 700392 / 26695) (Campylobacter pylori).